Reading from the N-terminus, the 222-residue chain is RNA-binding protein KhpB (222 aa).

Residues Asp-2–Ile-51 form a jag_N domain region. Residues Lys-54 to Lys-133 form the KH domain. Residues Asn-138–Ser-204 form the R3H domain.

It belongs to the KhpB RNA-binding protein family. As to quaternary structure, forms a complex with KhpA. Homodimer or homotrimer.

The protein resides in the cytoplasm. In terms of biological role, a probable RNA chaperone. Forms a complex with KhpA which binds to cellular RNA and controls its expression. Plays a role in peptidoglycan (PG) homeostasis and cell length regulation. The sequence is that of RNA-binding protein KhpB from Clostridium symbiosum (Bacteroides symbiosus).